The primary structure comprises 365 residues: Putative carbonic anhydrase-like protein 1 (365 aa).

A signal peptide spans 1 to 25 (MRFECSHFPLFLIILTCHISPLKSS). Residues 28–356 (YQWSYDSDVF…TNNRLVRTNI (329 aa)) form the Alpha-carbonic anhydrase domain. Tyr-223 is an active-site residue. Substrate is bound by residues Thr-295 and 295–296 (TS).

Belongs to the alpha-carbonic anhydrase family.

It is found in the secreted. In Caenorhabditis elegans, this protein is Putative carbonic anhydrase-like protein 1 (cah-1).